Here is an 89-residue protein sequence, read N- to C-terminus: Defensin-like protein 197 (89 aa).

An N-terminal signal peptide occupies residues 1 to 26 (MKFVSVFLVLFIFFLVVLEAPEKIEA). 4 disulfide bridges follow: cysteine 33–cysteine 86, cysteine 46–cysteine 70, cysteine 55–cysteine 81, and cysteine 59–cysteine 83.

The protein belongs to the DEFL family. Protease inhibitor I18 (RTI/MTI-2) subfamily.

Its subcellular location is the secreted. In Arabidopsis thaliana (Mouse-ear cress), this protein is Defensin-like protein 197 (ATTI6).